The sequence spans 127 residues: Small ribosomal subunit protein uS12m (127 aa).

It belongs to the universal ribosomal protein uS12 family.

It is found in the mitochondrion. Its function is as follows. Protein S12 is involved in the translation initiation step. This chain is Small ribosomal subunit protein uS12m (RPS12), found in Chondrus crispus (Carrageen Irish moss).